Reading from the N-terminus, the 444-residue chain is MSEVTKELLELVWGTKSSPGLSDTIFCRWTQGFVFSESEGSALEQFEGGPCAVIAPVQAFLLKKLLFSSEKSSWRDCSEEEQKELLCHTLCDIVESAYDSSGSYCLVSWLRGRTPEEAARISGSPAQSSCQVEHSSALAVEELGFERFHALIQKRSFRTVSELKDAVLDQYSMWGNKFGVLLFLYSVLLTKGIENIKNSIEDANEPLIDPVYGHGSQSLINLLLTGHAVSNVWDGDRECSGMQLLGIHEQAAVGFLTLMEALRYCKVGSYLKSPKFPIWIVGSETHLTVFFAKDMALVAPEAPSEQARRVFQTYDPEDNGFIADSLLEDVMKALDLVSDPEYINLMKNKLDPEGLGIILLGPFLQEFFPDQGSSGPESFTVYHYNGLKQSNYNEKVMYVEGTAVVMGFEDPMLQTDDTPIKRCLQTKWPYIELLWTTDRCPSLN.

The active-site Nucleophile is cysteine 51. A Phosphoserine modification is found at serine 124. Histidine 286 serves as the catalytic Proton acceptor.

The protein belongs to the MINDY deubiquitinase family. FAM188 subfamily. In terms of assembly, interacts with COPS5.

Its subcellular location is the nucleus. The catalysed reaction is Thiol-dependent hydrolysis of ester, thioester, amide, peptide and isopeptide bonds formed by the C-terminal Gly of ubiquitin (a 76-residue protein attached to proteins as an intracellular targeting signal).. Hydrolase that can remove 'Lys-48'-linked conjugated ubiquitin from proteins. The chain is Ubiquitin carboxyl-terminal hydrolase MINDY-3 from Mus musculus (Mouse).